Consider the following 299-residue polypeptide: Oxygen-dependent coproporphyrinogen-III oxidase (299 aa).

Serine 92 lines the substrate pocket. Mn(2+) contacts are provided by histidine 96 and histidine 106. The active-site Proton donor is the histidine 106. 108–110 lines the substrate pocket; it reads NVR. The Mn(2+) site is built by histidine 145 and histidine 175. An important for dimerization region spans residues 240-275; the sequence is YVEFNLVWDRGTLFGLQTGGRTESILMSMPPLVRWE. 258-260 lines the substrate pocket; that stretch reads GGR.

It belongs to the aerobic coproporphyrinogen-III oxidase family. In terms of assembly, homodimer. The cofactor is Mn(2+).

The protein resides in the cytoplasm. It catalyses the reaction coproporphyrinogen III + O2 + 2 H(+) = protoporphyrinogen IX + 2 CO2 + 2 H2O. It participates in porphyrin-containing compound metabolism; protoporphyrin-IX biosynthesis; protoporphyrinogen-IX from coproporphyrinogen-III (O2 route): step 1/1. Involved in the heme biosynthesis. Catalyzes the aerobic oxidative decarboxylation of propionate groups of rings A and B of coproporphyrinogen-III to yield the vinyl groups in protoporphyrinogen-IX. The protein is Oxygen-dependent coproporphyrinogen-III oxidase of Escherichia coli (strain SE11).